Consider the following 565-residue polypeptide: MKATQTLIATTKELPKEAVLISHQYMLKAGLIKKLASGIYTWMPLGLKVLQKIQNIVRDEMNKAGASELLLPSILPSELLQETHRWDKFGPELLKLHDRHNRDFCYGPTHEEPIVDMARDTIKSYKQLPLNLYQIQTKFRDEIRPRFGVMRAREFIMKDAYSFHENSQCLRNTYNTMYATYCNILDKIGLAYRPVKADTGAIGGDNSHEFQVLANAGEDIICYSNGSDYAANIELATYAKPDLSKRVNSQNTIEKIHTPNIKTIEKLYKEMSFDIKKTIKTMVIKDAGGNFFALVIRGDHELNETKINKLDQIIAPYTLATKEEIFSIFNANPGSLGIYNCPISIIADYSAIAITDLVCGANEDDYHFTNVNWDRDVTNYQIADIRNVVTGDISPDCKGTLELTNGIEVGHIFELEDVYSKPMNANIIGQDGKSKPMLMGCYGFGVSRVMAAAIEQSHDENGIIWPESIAPYQVAILPINYNKSDKVKEVADKLYQDLLGDGIDVLLDDRGARPGVMFADADLIGYSHHVVIGDKLLEQGLIEYKNRKTQEKQEITIAELIKILK.

The protein belongs to the class-II aminoacyl-tRNA synthetase family. ProS type 1 subfamily. Homodimer.

The protein localises to the cytoplasm. It catalyses the reaction tRNA(Pro) + L-proline + ATP = L-prolyl-tRNA(Pro) + AMP + diphosphate. Its function is as follows. Catalyzes the attachment of proline to tRNA(Pro) in a two-step reaction: proline is first activated by ATP to form Pro-AMP and then transferred to the acceptor end of tRNA(Pro). As ProRS can inadvertently accommodate and process non-cognate amino acids such as alanine and cysteine, to avoid such errors it has two additional distinct editing activities against alanine. One activity is designated as 'pretransfer' editing and involves the tRNA(Pro)-independent hydrolysis of activated Ala-AMP. The other activity is designated 'posttransfer' editing and involves deacylation of mischarged Ala-tRNA(Pro). The misacylated Cys-tRNA(Pro) is not edited by ProRS. This chain is Proline--tRNA ligase, found in Francisella tularensis subsp. mediasiatica (strain FSC147).